The sequence spans 252 residues: MQYPVDTHTHTVASTHAYSTIHDYLAVAKQKGIRLFATTDHGPAMADAPHFWHFVNLRVLPRMVDGVGILRGIEANIKNREGEIDYFGDYLSQLDIVLAGFHEPVFPPSDKATHTEAMINAIKSGKVDIITHPGNPAYPIDIEAVAAAAAEYGVALEINNSSFEVSRKGSEANCTAIAKAAKELGATLVMGSDSHVAFSLGGFDRALSIIEAVDYPKDKLLNRSPMALLNFLAQRGHKSVADLMPLFSDDIA.

The Zn(2+) site is built by histidine 8, histidine 10, histidine 16, histidine 41, glutamate 74, histidine 102, histidine 132, aspartate 193, and histidine 195.

This sequence belongs to the PHP family. Zn(2+) is required as a cofactor.

The chain is Probable phosphatase Shewmr4_2619 from Shewanella sp. (strain MR-4).